The chain runs to 694 residues: Heat shock protein homolog SSE1 (694 aa).

Residues 671-694 (AQRSADSEAKKDATPEGDAQMDLD) form a disordered region. The segment covering 675–684 (ADSEAKKDAT) has biased composition (basic and acidic residues).

It belongs to the heat shock protein 70 family.

Its subcellular location is the cytoplasm. This is Heat shock protein homolog SSE1 (SSE1) from Candida glabrata (strain ATCC 2001 / BCRC 20586 / JCM 3761 / NBRC 0622 / NRRL Y-65 / CBS 138) (Yeast).